The following is a 151-amino-acid chain: Chaperonin GroEL (151 aa).

41–45 (DGTTT) serves as a coordination point for ATP.

It belongs to the chaperonin (HSP60) family. In terms of assembly, forms a cylinder of 14 subunits composed of two heptameric rings stacked back-to-back. Interacts with the co-chaperonin GroES.

The protein resides in the cytoplasm. The catalysed reaction is ATP + H2O + a folded polypeptide = ADP + phosphate + an unfolded polypeptide.. Its function is as follows. Together with its co-chaperonin GroES, plays an essential role in assisting protein folding. The GroEL-GroES system forms a nano-cage that allows encapsulation of the non-native substrate proteins and provides a physical environment optimized to promote and accelerate protein folding. The chain is Chaperonin GroEL from Mycolicibacterium fortuitum (Mycobacterium fortuitum).